We begin with the raw amino-acid sequence, 121 residues long: Acid shock protein (121 aa).

An N-terminal signal peptide occupies residues 1-21 (MKKVLALMVAATLGLSSVAFA). The propeptide occupies 22 to 63 (ADTTATATPAATSTTATVAAQTKATQHQKHKVTKKTTEQKAQ). Positions 40 to 121 (AAQTKATQHQ…AKKPVAAPAA (82 aa)) are disordered. A compositionally biased stretch (basic residues) spans 84–93 (AAKKHVKKAS). Residues 94 to 103 (VQKAPVQKAQ) show a composition bias toward low complexity. The segment covering 104-113 (AAKKHHKTAK) has biased composition (basic residues).

The protein belongs to the Asr family. Post-translationally, proteolytic processing gives rise to the active protein.

The protein localises to the periplasm. In terms of biological role, required for growth and/or survival at acidic conditions. This is Acid shock protein from Yersinia pestis bv. Antiqua (strain Antiqua).